The sequence spans 683 residues: UvrABC system protein B (683 aa).

Residues 31–414 (AGFEKGYKEQ…ELERTDHKVE (384 aa)) form the Helicase ATP-binding domain. 44–51 (GATGTGKT) is an ATP binding site. Positions 97-120 (YYDYYQPEAYVPQSDTYIEKDSAI) match the Beta-hairpin motif. A Helicase C-terminal domain is found at 435–601 (QIDDLVGEIN…TIIKPVHDVI (167 aa)). The UVR domain maps to 632–667 (KTMIKNLQEQMKEAAKKLDFEEAANLRDAIMELQSS). Residues 662 to 683 (MELQSSSRRPKTRKGKALNGKR) are disordered. Residues 669-683 (RRPKTRKGKALNGKR) are compositionally biased toward basic residues.

It belongs to the UvrB family. As to quaternary structure, forms a heterotetramer with UvrA during the search for lesions. Interacts with UvrC in an incision complex.

It localises to the cytoplasm. Functionally, the UvrABC repair system catalyzes the recognition and processing of DNA lesions. A damage recognition complex composed of 2 UvrA and 2 UvrB subunits scans DNA for abnormalities. Upon binding of the UvrA(2)B(2) complex to a putative damaged site, the DNA wraps around one UvrB monomer. DNA wrap is dependent on ATP binding by UvrB and probably causes local melting of the DNA helix, facilitating insertion of UvrB beta-hairpin between the DNA strands. Then UvrB probes one DNA strand for the presence of a lesion. If a lesion is found the UvrA subunits dissociate and the UvrB-DNA preincision complex is formed. This complex is subsequently bound by UvrC and the second UvrB is released. If no lesion is found, the DNA wraps around the other UvrB subunit that will check the other stand for damage. The chain is UvrABC system protein B from Lactobacillus acidophilus (strain ATCC 700396 / NCK56 / N2 / NCFM).